The following is a 919-amino-acid chain: MFS-type transporter clz9 (919 aa).

Over residues 1–11 (MAASTKPTTKL) the composition is skewed to polar residues. The tract at residues 1–33 (MAASTKPTTKLSTEEDDVSRRDSESSADFMKSN) is disordered. A helical membrane pass occupies residues 69-89 (VVASFAAAISPFSTSTYYPVV). N-linked (GlcNAc...) asparagine glycosylation occurs at asparagine 104. A run of 3 helical transmembrane segments spans residues 132–152 (PMFL…ALQN), 192–212 (LIYA…IGGL), and 222–242 (VFWF…IFFG). The N-linked (GlcNAc...) asparagine glycan is linked to asparagine 260. The next 4 membrane-spanning stretches (helical) occupy residues 303 to 323 (FILS…TSVL), 333 to 353 (YDAV…LLAY), 393 to 413 (LGFV…YGWQ), and 418 to 438 (APLA…TGVM). Asparagine 461 carries N-linked (GlcNAc...) asparagine glycosylation. A helical transmembrane segment spans residues 465 to 485 (LLLGAGAVAVVGPLNKSAGIG). The DDE-1 domain maps to 641 to 809 (REWVTLIQGI…FTSANICSSF (169 aa)). The disordered stretch occupies residues 840-897 (EAPWEAKTPSNRKKKQIQKRGTLTKGEGEDTLAQKEADQQIEREQRQGGEQSGRSRQA). The segment covering 865 to 886 (GEGEDTLAQKEADQQIEREQRQ) has biased composition (basic and acidic residues). Residues 887–896 (GGEQSGRSRQ) are compositionally biased toward low complexity. Asparagine 915 is a glycosylation site (N-linked (GlcNAc...) asparagine).

It belongs to the major facilitator superfamily. CAR1 family.

The protein resides in the membrane. Functionally, MFS-type transporter; part of the gene cluster that mediates the biosynthesis of squalestatin S1 (SQS1, also known as zaragozic acid A), a heavily oxidized fungal polyketide that offers potent cholesterol lowering activity by targeting squalene synthase (SS). In Cochliobolus lunatus (Filamentous fungus), this protein is MFS-type transporter clz9.